The sequence spans 185 residues: UPF0669 protein C6orf120 homolog (185 aa).

The first 23 residues, 1-23, serve as a signal peptide directing secretion; sequence MAARWRRILIVFVAAQVLCLVNT. An N-linked (GlcNAc...) asparagine glycan is attached at N47.

The protein belongs to the UPF0669 family.

The protein resides in the secreted. The polypeptide is UPF0669 protein C6orf120 homolog (Gallus gallus (Chicken)).